A 499-amino-acid chain; its full sequence is Glutamate--tRNA ligase (499 aa).

The short motif at 12-22 is the 'HIGH' region element; the sequence is PSPTGHLHIGN. Residues 259 to 263 carry the 'KMSKS' region motif; sequence KLSKR. An ATP-binding site is contributed by Lys-262.

The protein belongs to the class-I aminoacyl-tRNA synthetase family. Glutamate--tRNA ligase type 1 subfamily. In terms of assembly, monomer.

The protein localises to the cytoplasm. The catalysed reaction is tRNA(Glu) + L-glutamate + ATP = L-glutamyl-tRNA(Glu) + AMP + diphosphate. Its function is as follows. Catalyzes the attachment of glutamate to tRNA(Glu) in a two-step reaction: glutamate is first activated by ATP to form Glu-AMP and then transferred to the acceptor end of tRNA(Glu). This chain is Glutamate--tRNA ligase, found in Lactobacillus johnsonii (strain CNCM I-12250 / La1 / NCC 533).